The sequence spans 126 residues: Glycine cleavage system H protein (126 aa).

Residues 22–104 (KAYIGITSFA…YEQAWMIVVE (83 aa)) enclose the Lipoyl-binding domain. An N6-lipoyllysine modification is found at K63.

This sequence belongs to the GcvH family. As to quaternary structure, the glycine cleavage system is composed of four proteins: P, T, L and H. (R)-lipoate is required as a cofactor.

Its function is as follows. The glycine cleavage system catalyzes the degradation of glycine. The H protein shuttles the methylamine group of glycine from the P protein to the T protein. Is also involved in protein lipoylation via its role as an octanoyl/lipoyl carrier protein intermediate. This is Glycine cleavage system H protein from Brevibacillus brevis (strain 47 / JCM 6285 / NBRC 100599).